The sequence spans 277 residues: MGIKVYKPTTNGRRNMTSLDFAEITTSTPEKSLLVALKSKAGRNNNGRITVRHQGGGHKRFYRLVDFKRNKDGVEAIVKTIEYDPNRSANIALVHYTDGVKAYIIAPKGLEVGQRIVSGPEADIKVGNALPLANIPVGTVVHNIELKPGRGGELVRAAGASAQVLGQEGKYVLVRLQSGEVRMILGTCRATVGTVGNEQHGLVNLGKAGRSRWKGIRPTVRGSVMNPNDHPHGGGEGKAPVGRKAPSTPWGKPALGLKTRNKKAKSDKLIVRRRNQK.

A disordered region spans residues 219-277 (TVRGSVMNPNDHPHGGGEGKAPVGRKAPSTPWGKPALGLKTRNKKAKSDKLIVRRRNQK).

Belongs to the universal ribosomal protein uL2 family. Part of the 50S ribosomal subunit. Forms a bridge to the 30S subunit in the 70S ribosome.

Functionally, one of the primary rRNA binding proteins. Required for association of the 30S and 50S subunits to form the 70S ribosome, for tRNA binding and peptide bond formation. It has been suggested to have peptidyltransferase activity; this is somewhat controversial. Makes several contacts with the 16S rRNA in the 70S ribosome. This Streptococcus suis (strain 98HAH33) protein is Large ribosomal subunit protein uL2.